The primary structure comprises 561 residues: Oligo-1,6-glucosidase (561 aa).

Residue Asp-199 is the Nucleophile of the active site. Residue Glu-256 is the Proton donor of the active site.

The protein belongs to the glycosyl hydrolase 13 family.

It localises to the cytoplasm. It catalyses the reaction Hydrolysis of (1-&gt;6)-alpha-D-glucosidic linkages in some oligosaccharides produced from starch and glycogen by alpha-amylase, and in isomaltose.. This Halalkalibacterium halodurans (strain ATCC BAA-125 / DSM 18197 / FERM 7344 / JCM 9153 / C-125) (Bacillus halodurans) protein is Oligo-1,6-glucosidase (malL).